A 159-amino-acid chain; its full sequence is Phosphopantetheine adenylyltransferase (159 aa).

Thr10 serves as a coordination point for substrate. ATP contacts are provided by residues 10–11 (TF) and His18. Positions 42, 74, and 88 each coordinate substrate. ATP contacts are provided by residues 89–91 (GMR), Glu99, and 124–130 (WSYVSST).

The protein belongs to the bacterial CoaD family. In terms of assembly, homohexamer. Mg(2+) serves as cofactor.

The protein localises to the cytoplasm. The catalysed reaction is (R)-4'-phosphopantetheine + ATP + H(+) = 3'-dephospho-CoA + diphosphate. Its pathway is cofactor biosynthesis; coenzyme A biosynthesis; CoA from (R)-pantothenate: step 4/5. Its function is as follows. Reversibly transfers an adenylyl group from ATP to 4'-phosphopantetheine, yielding dephospho-CoA (dPCoA) and pyrophosphate. The protein is Phosphopantetheine adenylyltransferase of Mannheimia succiniciproducens (strain KCTC 0769BP / MBEL55E).